A 397-amino-acid chain; its full sequence is Chorismate synthase (397 aa).

2 residues coordinate NADP(+): Arg40 and Arg46. FMN-binding positions include 129 to 131, 257 to 258, Gly302, 317 to 321, and Arg343; these read RSS, QA, and KPISS.

It belongs to the chorismate synthase family. Homotetramer. The cofactor is FMNH2.

The catalysed reaction is 5-O-(1-carboxyvinyl)-3-phosphoshikimate = chorismate + phosphate. It participates in metabolic intermediate biosynthesis; chorismate biosynthesis; chorismate from D-erythrose 4-phosphate and phosphoenolpyruvate: step 7/7. Catalyzes the anti-1,4-elimination of the C-3 phosphate and the C-6 proR hydrogen from 5-enolpyruvylshikimate-3-phosphate (EPSP) to yield chorismate, which is the branch point compound that serves as the starting substrate for the three terminal pathways of aromatic amino acid biosynthesis. This reaction introduces a second double bond into the aromatic ring system. This Pelodictyon phaeoclathratiforme (strain DSM 5477 / BU-1) protein is Chorismate synthase.